The chain runs to 213 residues: High frequency lysogenization protein HflD (213 aa).

A coiled-coil region spans residues 99–126 (LSSAKGALDTLGNRINGLQRQLEHFDLQ).

Belongs to the HflD family. Interacts with CII protein from phage lambda.

It localises to the cytoplasm. The protein localises to the cell inner membrane. Functionally, negative regulator of phage lambda lysogenization. Contributes to the degradation of the phage regulatory protein CII. Acts probably by holding CII on the membrane surface, away from the target promoters, but close to the FtsH protease. The sequence is that of High frequency lysogenization protein HflD from Escherichia coli O157:H7.